A 473-amino-acid polypeptide reads, in one-letter code: Gamma-aminobutyric acid receptor subunit beta-3 (473 aa).

Residues 1 to 25 (MWGLAGGRLFGIFSAPVLVAVVCCA) form the signal peptide. Residues 26-246 (QSVNDPGNMS…FRLKRNIGYF (221 aa)) are Extracellular-facing. N-linked (GlcNAc...) asparagine glycans are attached at residues Asn33 and Asn105. 120 to 122 (DTY) is a binding site for benzamidine. Tyr122 serves as a coordination point for 4-aminobutanoate. Residue Tyr122 coordinates histamine. Cys161 and Cys175 are oxidised to a cystine. Asn174 carries an N-linked (GlcNAc...) asparagine glycan. The 4-aminobutanoate site is built by Glu180 and Tyr182. Benzamidine-binding positions include 180-182 (ESY) and Phe225. 181-182 (SY) lines the histamine pocket. Residue Thr227 coordinates 4-aminobutanoate. Position 227 (Thr227) interacts with histamine. The chain crosses the membrane as a helical span at residues 247–267 (ILQTYMPSILITILSWVSFWI). Over 268 to 271 (NYDA) the chain is Cytoplasmic. A helical membrane pass occupies residues 272-292 (SAARVALGITTVLTMTTINTH). The Extracellular portion of the chain corresponds to 293–304 (LRETLPKIPYVK). A helical transmembrane segment spans residues 305–328 (AIDMYLMGCFVFVFLALLEYAFVN). The Cytoplasmic portion of the chain corresponds to 329-447 (YIFFGRGPQR…KIPDLTDVNA (119 aa)). The chain crosses the membrane as a helical span at residues 448–470 (IDRWSRIVFPFTFSLFNLVYWLY). Topologically, residues 471-473 (YVN) are extracellular.

Belongs to the ligand-gated ion channel (TC 1.A.9) family. Gamma-aminobutyric acid receptor (TC 1.A.9.5) subfamily. GABRB3 sub-subfamily. As to quaternary structure, heteropentamer, formed by a combination of alpha (GABRA1-6), beta (GABRB1-3), gamma (GABRG1-3), delta (GABRD), epsilon (GABRE), rho (GABRR1-3), pi (GABRP) and theta (GABRQ) chains, each subunit exhibiting distinct physiological and pharmacological properties. Can form functional homopentamers (in vitro). Interacts with UBQLN1. May interact with KIF21B. Identified in a complex of 720 kDa composed of LHFPL4, NLGN2, GABRA1, GABRB2, GABRG2 and GABRB3. Interacts with LHFPL4. Interacts with GIT1; this interaction is required for synaptic GABRB3 surface stability and inhibitory synapse strength.

Its subcellular location is the postsynaptic cell membrane. The protein resides in the cell membrane. The protein localises to the cytoplasmic vesicle membrane. It carries out the reaction chloride(in) = chloride(out). Its activity is regulated as follows. Potentiated by histamine. Beta subunit of the heteropentameric ligand-gated chloride channel gated by gamma-aminobutyric acid (GABA), a major inhibitory neurotransmitter in the brain. GABA-gated chloride channels, also named GABA(A) receptors (GABAAR), consist of five subunits arranged around a central pore and contain GABA active binding site(s) located at the alpha and beta subunit interface(s). GABAARs containing beta-3/GABRB3 subunit are found at both synaptic and extrasynaptic sites. When activated by GABA, GABAARs selectively allow the flow of chloride anions across the cell membrane down their electrochemical gradient. Chloride influx into the postsynaptic neuron following GABAAR opening decreases the neuron ability to generate a new action potential, thereby reducing nerve transmission. GABAARs containing alpha-1 and beta-3 subunits exhibit synaptogenic activity; the gamma-2 subunit being necessary but not sufficient to induce rapid synaptic contacts formation. Extrasynaptic beta-3 receptors contribute to the tonic GABAergic inhibition. GABAARs containing alpha-1, beta-3 and epsilon subunits may also permit spontaneous chloride channel activity while preserving the structural information required for GABA-gated openings. Beta-containing GABAARs can simultaneously bind GABA and histamine where histamine binds at the interface of two neighboring beta subunits, which may be involved in the regulation of sleep and wakefulness. Plays an important role in somatosensation and in the production of antinociception. The chain is Gamma-aminobutyric acid receptor subunit beta-3 from Homo sapiens (Human).